The primary structure comprises 557 residues: Dihydroxy-acid dehydratase (557 aa).

Asp78 provides a ligand contact to Mg(2+). A [2Fe-2S] cluster-binding site is contributed by Cys119. The Mg(2+) site is built by Asp120 and Lys121. Position 121 is an N6-carboxylysine (Lys121). Position 192 (Cys192) interacts with [2Fe-2S] cluster. Residue Glu442 coordinates Mg(2+). The active-site Proton acceptor is the Ser468.

The protein belongs to the IlvD/Edd family. Homodimer. The cofactor is [2Fe-2S] cluster. Mg(2+) serves as cofactor.

The enzyme catalyses (2R)-2,3-dihydroxy-3-methylbutanoate = 3-methyl-2-oxobutanoate + H2O. It catalyses the reaction (2R,3R)-2,3-dihydroxy-3-methylpentanoate = (S)-3-methyl-2-oxopentanoate + H2O. It participates in amino-acid biosynthesis; L-isoleucine biosynthesis; L-isoleucine from 2-oxobutanoate: step 3/4. It functions in the pathway amino-acid biosynthesis; L-valine biosynthesis; L-valine from pyruvate: step 3/4. Functionally, functions in the biosynthesis of branched-chain amino acids. Catalyzes the dehydration of (2R,3R)-2,3-dihydroxy-3-methylpentanoate (2,3-dihydroxy-3-methylvalerate) into 2-oxo-3-methylpentanoate (2-oxo-3-methylvalerate) and of (2R)-2,3-dihydroxy-3-methylbutanoate (2,3-dihydroxyisovalerate) into 2-oxo-3-methylbutanoate (2-oxoisovalerate), the penultimate precursor to L-isoleucine and L-valine, respectively. This is Dihydroxy-acid dehydratase from Bacillus cereus (strain ZK / E33L).